We begin with the raw amino-acid sequence, 264 residues long: Protein hob3 (264 aa).

Residues 17-237 form the BAR domain; it reads VMMKTGHVER…FDNSVREDYS (221 aa). 2 coiled-coil regions span residues 25 to 65 and 165 to 187; these read ERTV…AMTA and RTEK…LVSE.

Its subcellular location is the cytoplasm. It localises to the cytoskeleton. Functionally, involved in cytokinesis and septation where it has a role in the localization of F-actin. The protein is Protein hob3 (hob3) of Schizosaccharomyces pombe (strain 972 / ATCC 24843) (Fission yeast).